Here is a 510-residue protein sequence, read N- to C-terminus: Lysine-specific demethylase 4D (510 aa).

The JmjN domain maps to 15-57; sequence IMIFRPTKEEFNDFDKYIAYMESQGAHRAGLAKVIPPKEWRAR. Residues E23 and E24 each carry the polyADP-ribosyl glutamic acid modification. 2-oxoglutarate is bound at residue Y133. The JmjC domain maps to 143–309; that stretch reads DGKTQQWNVG…YGKVASQCSC (167 aa). Positions 189 and 191 each coordinate Fe cation. 2-oxoglutarate contacts are provided by N199 and K207. The Zn(2+) site is built by C235 and H241. K242 lines the 2-oxoglutarate pocket. H277 is a Fe cation binding site. Residues C307 and C309 each coordinate Zn(2+). Residues 397–510 are disordered; that stretch reads MCHTSRQAAD…ASEGGLTSDP (114 aa). The span at 461 to 471 shows a compositional bias: basic and acidic residues; that stretch reads RLPEGRDDRSP.

This sequence belongs to the JHDM3 histone demethylase family. The cofactor is Fe(2+). In terms of processing, ubiquitinated via 'Lys-63'-linked ubiquitin chains. Deubiquitinated by USP14 with the help of TRIM14 leading to stabilization.

Its subcellular location is the nucleus. It carries out the reaction N(6),N(6),N(6)-trimethyl-L-lysyl(9)-[histone H3] + 2 2-oxoglutarate + 2 O2 = N(6)-methyl-L-lysyl(9)-[histone H3] + 2 formaldehyde + 2 succinate + 2 CO2. Its function is as follows. Histone demethylase that specifically demethylates 'Lys-9' of histone H3, thereby playing a central role in histone code. Does not demethylate histone H3 'Lys-4', H3 'Lys-27', H3 'Lys-36' nor H4 'Lys-20'. Demethylates both di- and trimethylated H3 'Lys-9' residue, while it has no activity on monomethylated residues. Demethylation of Lys residue generates formaldehyde and succinate. The protein is Lysine-specific demethylase 4D (Kdm4d) of Rattus norvegicus (Rat).